The sequence spans 210 residues: NDR1/HIN1-like protein 12 (210 aa).

A helical transmembrane segment spans residues 23–43 (GVIIGFIIIVLITIFLVWIIL). Residue Asn61 is glycosylated (N-linked (GlcNAc...) asparagine).

In terms of assembly, may form oligomers or be a component of larger protein complex in plasma membranes. As to expression, expressed in leaves, stems and flowers, and, to a lower extent, in siliques and roots.

It localises to the cell membrane. May play a role in plant immunity. The sequence is that of NDR1/HIN1-like protein 12 from Arabidopsis thaliana (Mouse-ear cress).